Consider the following 490-residue polypeptide: Aspartyl/glutamyl-tRNA(Asn/Gln) amidotransferase subunit B (490 aa).

Belongs to the GatB/GatE family. GatB subfamily. Heterotrimer of A, B and C subunits.

The enzyme catalyses L-glutamyl-tRNA(Gln) + L-glutamine + ATP + H2O = L-glutaminyl-tRNA(Gln) + L-glutamate + ADP + phosphate + H(+). The catalysed reaction is L-aspartyl-tRNA(Asn) + L-glutamine + ATP + H2O = L-asparaginyl-tRNA(Asn) + L-glutamate + ADP + phosphate + 2 H(+). In terms of biological role, allows the formation of correctly charged Asn-tRNA(Asn) or Gln-tRNA(Gln) through the transamidation of misacylated Asp-tRNA(Asn) or Glu-tRNA(Gln) in organisms which lack either or both of asparaginyl-tRNA or glutaminyl-tRNA synthetases. The reaction takes place in the presence of glutamine and ATP through an activated phospho-Asp-tRNA(Asn) or phospho-Glu-tRNA(Gln). This chain is Aspartyl/glutamyl-tRNA(Asn/Gln) amidotransferase subunit B, found in Methylobacterium nodulans (strain LMG 21967 / CNCM I-2342 / ORS 2060).